A 444-amino-acid chain; its full sequence is Probable D-serine dehydratase (444 aa).

Lys118 carries the N6-(pyridoxal phosphate)lysine modification.

The protein belongs to the serine/threonine dehydratase family. DsdA subfamily. Pyridoxal 5'-phosphate is required as a cofactor.

It catalyses the reaction D-serine = pyruvate + NH4(+). The protein is Probable D-serine dehydratase of Desulfitobacterium hafniense (strain Y51).